Consider the following 313-residue polypeptide: Hydroxyacylglutathione hydrolase, mitochondrial (313 aa).

Zn(2+)-binding residues include His-107, His-109, Asp-111, His-112, His-163, and Asp-187. Substrate-binding positions include 196 to 198 and 226 to 228; these read KFF and HEY. A Zn(2+)-binding site is contributed by His-226. 2 stretches are compositionally biased toward basic and acidic residues: residues 285–294 and 301–313; these read VQEHAGERDP and IRKE…VPKD. The tract at residues 285-313 is disordered; it reads VQEHAGERDPISTMGAIRKEKDHFKVPKD. 302–305 is a binding site for substrate; the sequence is RKEK.

Belongs to the metallo-beta-lactamase superfamily. Glyoxalase II family. In terms of assembly, monomer. Requires Zn(2+) as cofactor.

It is found in the mitochondrion matrix. It localises to the cytoplasm. The enzyme catalyses an S-(2-hydroxyacyl)glutathione + H2O = a 2-hydroxy carboxylate + glutathione + H(+). It catalyses the reaction (R)-S-lactoylglutathione + H2O = (R)-lactate + glutathione + H(+). Its function is as follows. Thiolesterase that catalyzes the hydrolysis of S-D-lactoyl-glutathione to form glutathione and D-lactic acid. In Xenopus tropicalis (Western clawed frog), this protein is Hydroxyacylglutathione hydrolase, mitochondrial (hagh).